The chain runs to 383 residues: Presenilin-associated rhomboid-like protein A, mitochondrial (383 aa).

A mitochondrion-targeting transit peptide spans 1–37 (MAWRSCFMKWTQINSINASSLCPKSTRLNIHPQQRCG). The disordered stretch occupies residues 35–75 (RCGFRKTERPSESKKGVQETEAEAGGHNRAVPPKPVPPLPP). Residues 38–83 (FRKTERPSESKKGVQETEAEAGGHNRAVPPKPVPPLPPRRPHQLFR) lie on the Mitochondrial matrix side of the membrane. Residues 39 to 52 (RKTERPSESKKGVQ) are compositionally biased toward basic and acidic residues. A compositionally biased stretch (pro residues) spans 66–75 (PPKPVPPLPP). Residues 84-104 (PLVFTVGFTGCSFGAAAILQY) form a helical membrane-spanning segment. Residues 105–168 (ESVKSRVQLA…FWSGLSEGQK (64 aa)) lie on the Mitochondrial intermembrane side of the membrane. The chain crosses the membrane as a helical span at residues 169–189 (TVTGIIALNTVVLCCWRVPAM). At 190 to 219 (QRFLVKYFTSNPASKTRCLPMVLSSFSHYS) the chain is on the mitochondrial matrix side. A helical transmembrane segment spans residues 220-240 (VIHMVVNMYVLWTFSSSIVSL). At 241–245 (LGREQ) the chain is on the mitochondrial intermembrane side. Residues 246 to 266 (FLALYLSGGVISTFVSYVFKT) form a helical membrane-spanning segment. The Mitochondrial matrix portion of the chain corresponds to 267-271 (ATGRL). A helical membrane pass occupies residues 272–292 (GPSLGASGSIMTVLAAVCTKI). S278 (nucleophile) is an active-site residue. Residues 293–298 (PEAKLG) are Mitochondrial intermembrane-facing. Residues 299-319 (IVLLPVISFSAGNALKALVAL) traverse the membrane as a helical segment. Residues 320-334 (DIAGLVLGWRFFDHA) are Mitochondrial matrix-facing. The helical transmembrane segment at 335-355 (AHLGGALFGVWYIGYGHELIW) threads the bilayer. H336 is a catalytic residue. At 356–383 (RKREPLIKFWHELRNMSPGRPGPGGGGG) the chain is on the mitochondrial intermembrane side.

It belongs to the peptidase S54 family.

It localises to the mitochondrion inner membrane. The catalysed reaction is Cleaves type-1 transmembrane domains using a catalytic dyad composed of serine and histidine that are contributed by different transmembrane domains.. Its function is as follows. Required for the control of apoptosis during postnatal growth. Essential for proteolytic processing of an antiapoptotic form of opa1 which prevents the release of mitochondrial cytochrome c in response to intrinsic apoptotic signals. This Danio rerio (Zebrafish) protein is Presenilin-associated rhomboid-like protein A, mitochondrial (parla).